The chain runs to 317 residues: TPR repeat-containing thioredoxin TDX (317 aa).

The tract at residues 1–48 (MATAGASSFEDEIMESDIELEGEAVEPDNDPPQKMGDPSVEVSDEKRD) is disordered. Residues 9–29 (FEDEIMESDIELEGEAVEPDN) show a composition bias toward acidic residues. TPR repeat units follow at residues 50 to 83 (AQLC…NPTS), 85 to 117 (IAYA…NPDS), and 119 to 151 (KGYK…DYDE). Residues 189–316 (EKQRKHAEEV…LERKVAQHGS (128 aa)) enclose the Thioredoxin domain. Active-site nucleophile residues include Cys-242 and Cys-245. An intrachain disulfide couples Cys-242 to Cys-245.

It belongs to the thioredoxin family.

Probable thiol-disulfide oxidoreductase that may participate in various redox reactions and act as chaperone under heat shock. May interact with HSP70 proteins through the TPR repeats. The sequence is that of TPR repeat-containing thioredoxin TDX from Oryza sativa subsp. japonica (Rice).